The chain runs to 305 residues: MELIFLGTSAGVPTRSRNVTAILLHLQHPTQPGVWLFDCGEGTQHQMLNTAFHPGKLERIFISHLHGDHLFGLPGLLCSRSMAGNPHPLTVYGPQGVREFIATTLRLSGSWTDFPLQIEEVSAGDILDDGLRKVTAFRLEHPLECYGYRVVEHDKPGALNARALKAAGVTPGPLFQALKAGKTVTLADGRQINGADYLAPAVAGKSVAIFGDTAPCEAALALAQGVDVMVHETTLDASMEEKANSRGHSSTRQTATLAREAAVGRLIMTHISSRYDDKGCQRLLAECRAIFPATELAYDFSVFPV.

Residues histidine 64, histidine 66, aspartate 68, histidine 69, histidine 141, aspartate 212, and histidine 270 each coordinate Zn(2+). Residue aspartate 68 is the Proton acceptor of the active site.

This sequence belongs to the RNase Z family. RNase BN subfamily. As to quaternary structure, homodimer. The cofactor is Zn(2+).

In terms of biological role, zinc phosphodiesterase, which has both exoribonuclease and endoribonuclease activities. This is Ribonuclease BN from Salmonella gallinarum (strain 287/91 / NCTC 13346).